A 178-amino-acid chain; its full sequence is Large ribosomal subunit protein uL5 (178 aa).

This sequence belongs to the universal ribosomal protein uL5 family. As to quaternary structure, part of the 50S ribosomal subunit; part of the 5S rRNA/L5/L18/L25 subcomplex. Contacts the 5S rRNA and the P site tRNA. Forms a bridge to the 30S subunit in the 70S ribosome.

In terms of biological role, this is one of the proteins that bind and probably mediate the attachment of the 5S RNA into the large ribosomal subunit, where it forms part of the central protuberance. In the 70S ribosome it contacts protein S13 of the 30S subunit (bridge B1b), connecting the 2 subunits; this bridge is implicated in subunit movement. Contacts the P site tRNA; the 5S rRNA and some of its associated proteins might help stabilize positioning of ribosome-bound tRNAs. The sequence is that of Large ribosomal subunit protein uL5 from Psychrobacter sp. (strain PRwf-1).